The primary structure comprises 106 residues: Iron-sulfur cluster assembly protein CyaY (106 aa).

Belongs to the frataxin family.

In terms of biological role, involved in iron-sulfur (Fe-S) cluster assembly. May act as a regulator of Fe-S biogenesis. The sequence is that of Iron-sulfur cluster assembly protein CyaY from Salmonella schwarzengrund (strain CVM19633).